Reading from the N-terminus, the 331-residue chain is MKQTVYTASPESQQIHVWSLNHEGTLTLVQVVDVPGQVQPMVVSPDKRYLYVGVRPEFRVLAYRIAPDDGALTFAAESALPGSPTHISTDHHGRFVFVGSYNAGNVSVTRLQDGLPVELVDVVEGLDGCHSANITPDNRTLWVPALKQERICLFTLSDDGHLVAQEPAEVNTVEGAGPRHMVFHPNRQYAYCVNELNSSVDVWQLKNPHGEIECVQTLDMMPADFSDTRWAADIHITPDGRHLYACDRTASLITVFSVSEDGSVLSVEGFQPTEAQPRGFNIDNSGKYLIAAGQKSHHIAVYEITGTQGLLTEKGRYAVGQGPMWVVVNAY.

This sequence belongs to the cycloisomerase 2 family.

The enzyme catalyses 6-phospho-D-glucono-1,5-lactone + H2O = 6-phospho-D-gluconate + H(+). Its pathway is carbohydrate degradation; pentose phosphate pathway; D-ribulose 5-phosphate from D-glucose 6-phosphate (oxidative stage): step 2/3. In terms of biological role, catalyzes the hydrolysis of 6-phosphogluconolactone to 6-phosphogluconate. The polypeptide is 6-phosphogluconolactonase (Salmonella paratyphi A (strain ATCC 9150 / SARB42)).